A 400-amino-acid chain; its full sequence is Phosphoglycerate kinase (400 aa).

Residues 24–26 (DFN), arginine 39, 62–65 (HFGR), arginine 121, and arginine 154 each bind substrate. ATP contacts are provided by residues lysine 205, glycine 296, glutamate 327, and 356–359 (GGDS).

This sequence belongs to the phosphoglycerate kinase family. In terms of assembly, monomer.

The protein resides in the cytoplasm. The enzyme catalyses (2R)-3-phosphoglycerate + ATP = (2R)-3-phospho-glyceroyl phosphate + ADP. The protein operates within carbohydrate degradation; glycolysis; pyruvate from D-glyceraldehyde 3-phosphate: step 2/5. This is Phosphoglycerate kinase from Rippkaea orientalis (strain PCC 8801 / RF-1) (Cyanothece sp. (strain PCC 8801)).